The sequence spans 359 residues: Popy class I histocompatibility antigen, alpha chain E (359 aa).

The signal sequence occupies residues 1–18 (GTLLLLLSEALALTETWA). The tract at residues 19–108 (GSHSLKYFHT…LRGYYNQTEA (90 aa)) is alpha-1. At 19 to 302 (GSHSLKYFHT…EPASQTTIPI (284 aa)) the chain is on the extracellular side. Asparagine 104 carries an N-linked (GlcNAc...) asparagine glycan. Residues 109-200 (GSHTLQWMHG…EKGKETLLHL (92 aa)) are alpha-2. Intrachain disulfides connect cysteine 119–cysteine 182 and cysteine 221–cysteine 277. Positions 201–292 (DPPKTHVTHH…GLPEPLTLRW (92 aa)) are alpha-3. In terms of domain architecture, Ig-like C1-type spans 203-291 (PKTHVTHHRI…EGLPEPLTLR (89 aa)). The connecting peptide stretch occupies residues 293–302 (EPASQTTIPI). The helical transmembrane segment at 303 to 326 (VGIFAGLVLLGAVVTGATVVAAVM) threads the bilayer. Over 327-359 (WRKKSSGGKGGSYSKAEWSDSAQGSESLTACKA) the chain is Cytoplasmic. A disordered region spans residues 330 to 359 (KSSGGKGGSYSKAEWSDSAQGSESLTACKA). Polar residues predominate over residues 346-359 (DSAQGSESLTACKA). The residue at position 351 (serine 351) is a Phosphoserine.

The protein belongs to the MHC class I family. Heterodimer of an alpha chain and a beta chain (beta-2-microglobulin).

The protein resides in the membrane. In terms of biological role, involved in the presentation of foreign antigens to the immune system. The protein is Popy class I histocompatibility antigen, alpha chain E (Popy-E) of Pongo pygmaeus (Bornean orangutan).